Reading from the N-terminus, the 141-residue chain is Large ribosomal subunit protein uL22 (141 aa).

It belongs to the universal ribosomal protein uL22 family. Part of the 50S ribosomal subunit.

In terms of biological role, this protein binds specifically to 23S rRNA; its binding is stimulated by other ribosomal proteins, e.g. L4, L17, and L20. It is important during the early stages of 50S assembly. It makes multiple contacts with different domains of the 23S rRNA in the assembled 50S subunit and ribosome. The globular domain of the protein is located near the polypeptide exit tunnel on the outside of the subunit, while an extended beta-hairpin is found that lines the wall of the exit tunnel in the center of the 70S ribosome. In Frankia casuarinae (strain DSM 45818 / CECT 9043 / HFP020203 / CcI3), this protein is Large ribosomal subunit protein uL22.